Consider the following 319-residue polypeptide: Phosphoenolpyruvate transferase (319 aa).

Asp-50 is a binding site for 7,8-didemethyl-8-hydroxy-5-deazariboflavin.

The protein belongs to the CofD family. In terms of assembly, homodimer. It depends on Mg(2+) as a cofactor.

The enzyme catalyses enolpyruvoyl-2-diphospho-5'-guanosine + 7,8-didemethyl-8-hydroxy-5-deazariboflavin = dehydro coenzyme F420-0 + GMP + H(+). It participates in cofactor biosynthesis; coenzyme F420 biosynthesis. Its function is as follows. Catalyzes the transfer of the phosphoenolpyruvate moiety from enoylpyruvoyl-2-diphospho-5'-guanosine (EPPG) to 7,8-didemethyl-8-hydroxy-5-deazariboflavin (FO) with the formation of dehydro coenzyme F420-0 and GMP. The polypeptide is Phosphoenolpyruvate transferase (Streptomyces avermitilis (strain ATCC 31267 / DSM 46492 / JCM 5070 / NBRC 14893 / NCIMB 12804 / NRRL 8165 / MA-4680)).